Here is a 42-residue protein sequence, read N- to C-terminus: Protein YmiD (42 aa).

This chain is Protein YmiD, found in Escherichia coli (strain K12).